The sequence spans 376 residues: Chaperone protein DnaJ (376 aa).

Positions 4–68 constitute a J domain; the sequence is DYYDILGVDR…DTRSRYDQFG (65 aa). The CR-type zinc finger occupies 135-217; the sequence is GGEKEIRIPH…CNGAGRRQVT (83 aa). Zn(2+)-binding residues include cysteine 148, cysteine 151, cysteine 165, cysteine 168, cysteine 191, cysteine 194, cysteine 205, and cysteine 208. 4 CXXCXGXG motif repeats span residues 148 to 155, 165 to 172, 191 to 198, and 205 to 212; these read CQVCKGDG, CSTCNGQG, CPACNGQG, and CEVCNGAG.

It belongs to the DnaJ family. Homodimer. It depends on Zn(2+) as a cofactor.

It localises to the cytoplasm. Its function is as follows. Participates actively in the response to hyperosmotic and heat shock by preventing the aggregation of stress-denatured proteins and by disaggregating proteins, also in an autonomous, DnaK-independent fashion. Unfolded proteins bind initially to DnaJ; upon interaction with the DnaJ-bound protein, DnaK hydrolyzes its bound ATP, resulting in the formation of a stable complex. GrpE releases ADP from DnaK; ATP binding to DnaK triggers the release of the substrate protein, thus completing the reaction cycle. Several rounds of ATP-dependent interactions between DnaJ, DnaK and GrpE are required for fully efficient folding. Also involved, together with DnaK and GrpE, in the DNA replication of plasmids through activation of initiation proteins. The protein is Chaperone protein DnaJ of Crocosphaera subtropica (strain ATCC 51142 / BH68) (Cyanothece sp. (strain ATCC 51142)).